The sequence spans 331 residues: Probable allantoicase (331 aa).

The protein belongs to the allantoicase family.

The enzyme catalyses allantoate + H2O = (S)-ureidoglycolate + urea. Its pathway is nitrogen metabolism; (S)-allantoin degradation; (S)-ureidoglycolate from allantoate (aminidohydrolase route): step 1/1. The polypeptide is Probable allantoicase (Stutzerimonas stutzeri (strain A1501) (Pseudomonas stutzeri)).